The chain runs to 197 residues: Nascent polypeptide-associated complex subunit alpha (197 aa).

The segment covering 1-18 (MTGSTETRHNEKDVKEPQ) has biased composition (basic and acidic residues). A disordered region spans residues 1–30 (MTGSTETRHNEKDVKEPQVDSDADSDNEAI). Residues 19–28 (VDSDADSDNE) show a composition bias toward acidic residues. Residues 58 to 123 (SRSEKKARKL…AKIEDLTQHA (66 aa)) enclose the NAC-A/B domain. Positions 134 to 155 (TREAPQLKTVEEDDNEDVEEDS) are disordered. Positions 144–155 (EEDDNEDVEEDS) are enriched in acidic residues. Residues 158-195 (IEEKDIELVISQANTTRNKAIRALKDADNDIVNAIMSL) form the UBA domain.

The protein belongs to the NAC-alpha family.

Its function is as follows. May promote appropriate targeting of ribosome-nascent polypeptide complexes. This chain is Nascent polypeptide-associated complex subunit alpha, found in Caenorhabditis briggsae.